The chain runs to 420 residues: D-tagatose-1,6-bisphosphate aldolase subunit GatZ (420 aa).

This sequence belongs to the GatZ/KbaZ family. GatZ subfamily. In terms of assembly, forms a complex with GatY.

It participates in carbohydrate metabolism; D-tagatose 6-phosphate degradation; D-glyceraldehyde 3-phosphate and glycerone phosphate from D-tagatose 6-phosphate: step 2/2. Functionally, component of the tagatose-1,6-bisphosphate aldolase GatYZ that is required for full activity and stability of the Y subunit. Could have a chaperone-like function for the proper and stable folding of GatY. When expressed alone, GatZ does not show any aldolase activity. Is involved in the catabolism of galactitol. In Escherichia coli O7:K1 (strain IAI39 / ExPEC), this protein is D-tagatose-1,6-bisphosphate aldolase subunit GatZ.